The chain runs to 810 residues: Phospholipase D alpha 2 (810 aa).

Residues 1-126 (MEECLLHGRL…LHGEEVDRWV (126 aa)) form the C2 domain. Asp187 provides a ligand contact to Ca(2+). In terms of domain architecture, PLD phosphodiesterase 1 spans 327–365 (TMFTHHQKIVVVDSEMPSGGSRSRRIVSFVGGLDLCDGR). Catalysis depends on residues His332, Lys334, and Asp339. An a 1,2-diacyl-sn-glycero-3-phosphate-binding site is contributed by His332. Ca(2+) contacts are provided by His371 and His405. A 1,2-diacyl-sn-glycero-3-phosphate is bound by residues Gln521 and His661. The 28-residue stretch at 656–683 (FMIYVHTKMMIVDDEYIIIGSANINQRS) folds into the PLD phosphodiesterase 2 domain. Active-site residues include His661, Lys663, and Asp668. Glu722 contributes to the Ca(2+) binding site.

It belongs to the phospholipase D family. C2-PLD subfamily. It depends on Ca(2+) as a cofactor. Highly expressed in roots, stems and flowers, moderately in leaves, seedlings and siliques. Not detected in dry seeds.

It is found in the cytoplasm. Its subcellular location is the membrane. The protein localises to the vacuole. It localises to the cytoplasmic vesicle. The protein resides in the clathrin-coated vesicle. The enzyme catalyses a 1,2-diacyl-sn-glycero-3-phosphocholine + H2O = a 1,2-diacyl-sn-glycero-3-phosphate + choline + H(+). Its function is as follows. Hydrolyzes glycerol-phospholipids at the terminal phosphodiesteric bond to generate phosphatidic acids (PA). Plays an important role in various cellular processes, including phytohormone action and response to stress, characterized by acidification of the cell. The sequence is that of Phospholipase D alpha 2 from Arabidopsis thaliana (Mouse-ear cress).